The following is a 226-amino-acid chain: Ribonuclease 3 (226 aa).

One can recognise an RNase III domain in the interval 6 to 128; that stretch reads INRLQRKLGY…LIGGIFLDSD (123 aa). Residue glutamate 41 coordinates Mg(2+). Aspartate 45 is an active-site residue. Mg(2+) is bound by residues aspartate 114 and glutamate 117. Residue glutamate 117 is part of the active site. A DRBM domain is found at 155 to 225; that stretch reads DPKTRLQEYL…AEQALKQLEL (71 aa).

This sequence belongs to the ribonuclease III family. In terms of assembly, homodimer. It depends on Mg(2+) as a cofactor.

The protein localises to the cytoplasm. It carries out the reaction Endonucleolytic cleavage to 5'-phosphomonoester.. Its function is as follows. Digests double-stranded RNA. Involved in the processing of primary rRNA transcript to yield the immediate precursors to the large and small rRNAs (23S and 16S). Processes some mRNAs, and tRNAs when they are encoded in the rRNA operon. Processes pre-crRNA and tracrRNA of type II CRISPR loci if present in the organism. The polypeptide is Ribonuclease 3 (Yersinia enterocolitica serotype O:8 / biotype 1B (strain NCTC 13174 / 8081)).